The chain runs to 193 residues: ATP-dependent Clp protease proteolytic subunit 2 (193 aa).

The active-site Nucleophile is serine 98. The active site involves histidine 123.

The protein belongs to the peptidase S14 family. Fourteen ClpP subunits assemble into 2 heptameric rings which stack back to back to give a disk-like structure with a central cavity, resembling the structure of eukaryotic proteasomes.

It is found in the cytoplasm. It carries out the reaction Hydrolysis of proteins to small peptides in the presence of ATP and magnesium. alpha-casein is the usual test substrate. In the absence of ATP, only oligopeptides shorter than five residues are hydrolyzed (such as succinyl-Leu-Tyr-|-NHMec, and Leu-Tyr-Leu-|-Tyr-Trp, in which cleavage of the -Tyr-|-Leu- and -Tyr-|-Trp bonds also occurs).. In terms of biological role, cleaves peptides in various proteins in a process that requires ATP hydrolysis. Has a chymotrypsin-like activity. Plays a major role in the degradation of misfolded proteins. The sequence is that of ATP-dependent Clp protease proteolytic subunit 2 from Bacillus anthracis.